Consider the following 304-residue polypeptide: uncharacterized protein (304 aa).

72-79 (GPTGSGKT) provides a ligand contact to ATP.

The protein belongs to the CbbQ/NirQ/NorQ/GpvN family.

This is an uncharacterized protein from Bacillus subtilis (strain 168).